The sequence spans 721 residues: Protein mu-NS (721 aa).

Residues 1–13 form an interaction with sigma-NS region; sequence MASFKGFSVNTVP. The RNA-binding stretch occupies residues 1–38; that stretch reads MASFKGFSVNTVPVSKAKRDISSLAATPGIRSQPFTPS. Residues 14–40 form an interaction with mu-2 region; sequence VSKAKRDISSLAATPGIRSQPFTPSVD. The segment at 471–721 is involved in the formation of factory-like inclusions; it reads SSDMVDGIKL…IDFSVPTDEL (251 aa). Coiled-coil stretches lie at residues 523–560 and 628–686; these read LLSQLRELSSEVTRLQMELSRTQSLNAQLEADAKSAQA and QMNG…NQRQ.

This sequence belongs to the orthoreovirus mu-NS protein family. In terms of assembly, interacts with mu-2. Interacts with sigma-NS; in viral factories. Interacts with the inner capsid proteins lambda-1 and sigma-2, and outer capsid protein lambda-2; in viral factories. The N-terminus is blocked.

Its subcellular location is the host cytoplasm. Functionally, non-structural protein implicated with protein sigma-NS in forming the matrix of viral factories, which are large inclusions in the host cytoplasm where replication intermediates are assembled and viral RNA replication takes place. Together with mu-2, recruits the other core proteins to these factories. This is Protein mu-NS (M3) from Mammalia (T1L).